A 367-amino-acid chain; its full sequence is Histidinol-phosphate aminotransferase (367 aa).

K221 carries the post-translational modification N6-(pyridoxal phosphate)lysine.

This sequence belongs to the class-II pyridoxal-phosphate-dependent aminotransferase family. Histidinol-phosphate aminotransferase subfamily. As to quaternary structure, homodimer. Requires pyridoxal 5'-phosphate as cofactor.

The enzyme catalyses L-histidinol phosphate + 2-oxoglutarate = 3-(imidazol-4-yl)-2-oxopropyl phosphate + L-glutamate. Its pathway is amino-acid biosynthesis; L-histidine biosynthesis; L-histidine from 5-phospho-alpha-D-ribose 1-diphosphate: step 7/9. The protein is Histidinol-phosphate aminotransferase of Erythrobacter litoralis (strain HTCC2594).